The chain runs to 363 residues: UDP-N-acetylglucosamine--N-acetylmuramyl-(pentapeptide) pyrophosphoryl-undecaprenol N-acetylglucosamine transferase (363 aa).

Residues 10 to 12, asparagine 124, serine 195, and glutamine 295 contribute to the UDP-N-acetyl-alpha-D-glucosamine site; that span reads TGG.

It belongs to the glycosyltransferase 28 family. MurG subfamily.

It localises to the cell membrane. It catalyses the reaction di-trans,octa-cis-undecaprenyl diphospho-N-acetyl-alpha-D-muramoyl-L-alanyl-D-glutamyl-meso-2,6-diaminopimeloyl-D-alanyl-D-alanine + UDP-N-acetyl-alpha-D-glucosamine = di-trans,octa-cis-undecaprenyl diphospho-[N-acetyl-alpha-D-glucosaminyl-(1-&gt;4)]-N-acetyl-alpha-D-muramoyl-L-alanyl-D-glutamyl-meso-2,6-diaminopimeloyl-D-alanyl-D-alanine + UDP + H(+). It participates in cell wall biogenesis; peptidoglycan biosynthesis. Its function is as follows. Cell wall formation. Catalyzes the transfer of a GlcNAc subunit on undecaprenyl-pyrophosphoryl-MurNAc-pentapeptide (lipid intermediate I) to form undecaprenyl-pyrophosphoryl-MurNAc-(pentapeptide)GlcNAc (lipid intermediate II). The chain is UDP-N-acetylglucosamine--N-acetylmuramyl-(pentapeptide) pyrophosphoryl-undecaprenol N-acetylglucosamine transferase from Bacillus subtilis (strain 168).